The primary structure comprises 559 residues: Asparagine--tRNA ligase, cytoplasmic (559 aa).

A Phosphoserine modification is found at S72. K255 and K501 each carry N6-acetyllysine.

The protein belongs to the class-II aminoacyl-tRNA synthetase family.

Its subcellular location is the cytoplasm. It catalyses the reaction tRNA(Asn) + L-asparagine + ATP = L-asparaginyl-tRNA(Asn) + AMP + diphosphate + H(+). This Bos taurus (Bovine) protein is Asparagine--tRNA ligase, cytoplasmic (NARS).